Reading from the N-terminus, the 127-residue chain is Ribosome-binding factor A (127 aa).

It belongs to the RbfA family. As to quaternary structure, monomer. Binds 30S ribosomal subunits, but not 50S ribosomal subunits or 70S ribosomes.

The protein resides in the cytoplasm. Its function is as follows. One of several proteins that assist in the late maturation steps of the functional core of the 30S ribosomal subunit. Associates with free 30S ribosomal subunits (but not with 30S subunits that are part of 70S ribosomes or polysomes). Required for efficient processing of 16S rRNA. May interact with the 5'-terminal helix region of 16S rRNA. This is Ribosome-binding factor A from Actinobacillus pleuropneumoniae serotype 7 (strain AP76).